The following is a 416-amino-acid chain: Interleukin-1 receptor type 2 (416 aa).

The N-terminal stretch at 1–13 (MFILLVLVTGVSA) is a signal peptide. The Extracellular segment spans residues 14–355 (FTTPAVVHTG…FQSLHTTVKE (342 aa)). 3 Ig-like C2-type domains span residues 29 to 136 (PVTS…LELK), 146 to 233 (PLVS…YNIT), and 249 to 357 (PVII…KEVS). 3 cysteine pairs are disulfide-bonded: C42–C128, C64–C120, and C164–C219. 4 N-linked (GlcNAc...) asparagine glycosylation sites follow: N124, N208, N231, and N289. C270 and C338 form a disulfide bridge. The helical transmembrane segment at 356–381 (VSSTFSWGIALAPLSLIILVVGAIWI) threads the bilayer. The Cytoplasmic segment spans residues 382-416 (RRRCKRQAGKTYGLTKLPTDNQDFPSSPNQIKEMK). Residues 396–416 (TKLPTDNQDFPSSPNQIKEMK) form a disordered region. Polar residues predominate over residues 399-416 (PTDNQDFPSSPNQIKEMK).

This sequence belongs to the interleukin-1 receptor family. In terms of assembly, associates with IL1RAP to form a non-signaling interleukin-1 receptor complex. Post-translationally, a soluble form (sIL1R2) can also be produced by proteolytic cleavage at the cell surface (shedding) involving a metalloproteinase.

Its subcellular location is the membrane. The protein localises to the cell membrane. It localises to the secreted. Its function is as follows. Non-signaling receptor for IL1A, IL1B and IL1RN. Reduces IL1B activities. Serves as a decoy receptor by competitive binding to IL1B and preventing its binding to IL1R1. Also modulates cellular response through non-signaling association with IL1RAP after binding to IL1B. IL1R2 (membrane and secreted forms) preferentially binds IL1B and poorly IL1A and IL1RN. The secreted IL1R2 recruits secreted IL1RAP with high affinity; this complex formation may be the dominant mechanism for neutralization of IL1B by secreted/soluble receptors. This Rattus norvegicus (Rat) protein is Interleukin-1 receptor type 2 (Il1r2).